A 170-amino-acid chain; its full sequence is ATP synthase subunit b (170 aa).

A helical membrane pass occupies residues 11 to 31 (GLNTGDIIFQLIAMLILLALL).

This sequence belongs to the ATPase B chain family. F-type ATPases have 2 components, F(1) - the catalytic core - and F(0) - the membrane proton channel. F(1) has five subunits: alpha(3), beta(3), gamma(1), delta(1), epsilon(1). F(0) has three main subunits: a(1), b(2) and c(10-14). The alpha and beta chains form an alternating ring which encloses part of the gamma chain. F(1) is attached to F(0) by a central stalk formed by the gamma and epsilon chains, while a peripheral stalk is formed by the delta and b chains.

The protein localises to the cell membrane. F(1)F(0) ATP synthase produces ATP from ADP in the presence of a proton or sodium gradient. F-type ATPases consist of two structural domains, F(1) containing the extramembraneous catalytic core and F(0) containing the membrane proton channel, linked together by a central stalk and a peripheral stalk. During catalysis, ATP synthesis in the catalytic domain of F(1) is coupled via a rotary mechanism of the central stalk subunits to proton translocation. Functionally, component of the F(0) channel, it forms part of the peripheral stalk, linking F(1) to F(0). This is ATP synthase subunit b from Bacillus pumilus (strain SAFR-032).